A 216-amino-acid polypeptide reads, in one-letter code: Pyridoxine/pyridoxamine 5'-phosphate oxidase (216 aa).

FMN is bound by residues 64 to 69 (RVVLLK), 79 to 80 (FT), lysine 85, lysine 86, and glutamine 108. Substrate is bound at residue lysine 69. Substrate-binding residues include tyrosine 126, arginine 130, and serine 134. Residues 143-144 (QS) and tryptophan 188 each bind FMN. 194-196 (RKH) lines the substrate pocket. Position 198 (arginine 198) interacts with FMN.

Belongs to the pyridoxamine 5'-phosphate oxidase family. As to quaternary structure, homodimer. FMN serves as cofactor.

It catalyses the reaction pyridoxamine 5'-phosphate + O2 + H2O = pyridoxal 5'-phosphate + H2O2 + NH4(+). The catalysed reaction is pyridoxine 5'-phosphate + O2 = pyridoxal 5'-phosphate + H2O2. The protein operates within cofactor metabolism; pyridoxal 5'-phosphate salvage; pyridoxal 5'-phosphate from pyridoxamine 5'-phosphate: step 1/1. It participates in cofactor metabolism; pyridoxal 5'-phosphate salvage; pyridoxal 5'-phosphate from pyridoxine 5'-phosphate: step 1/1. Catalyzes the oxidation of either pyridoxine 5'-phosphate (PNP) or pyridoxamine 5'-phosphate (PMP) into pyridoxal 5'-phosphate (PLP). This chain is Pyridoxine/pyridoxamine 5'-phosphate oxidase, found in Wolbachia pipientis wMel.